The sequence spans 223 residues: UPF0441 protein YgiB (223 aa).

Low complexity predominate over residues 178–195; sequence TVPKTAMAPKPATTTTVT. Residues 178-223 are disordered; that stretch reads TVPKTAMAPKPATTTTVTRGGFGESVAKQSTMQRSAAGTSTRSMGG. Residues 204 to 223 show a composition bias toward polar residues; sequence AKQSTMQRSAAGTSTRSMGG.

Belongs to the UPF0441 family.

This is UPF0441 protein YgiB from Salmonella enteritidis PT4 (strain P125109).